The chain runs to 274 residues: D-aminoacyl-tRNA deacylase (274 aa).

This sequence belongs to the DtdA deacylase family. As to quaternary structure, monomer. Zn(2+) is required as a cofactor.

The catalysed reaction is a D-aminoacyl-tRNA + H2O = a tRNA + a D-alpha-amino acid + H(+). The enzyme catalyses glycyl-tRNA(Ala) + H2O = tRNA(Ala) + glycine + H(+). Its function is as follows. D-aminoacyl-tRNA deacylase with broad substrate specificity. By recycling D-aminoacyl-tRNA to D-amino acids and free tRNA molecules, this enzyme counteracts the toxicity associated with the formation of D-aminoacyl-tRNA entities in vivo. The sequence is that of D-aminoacyl-tRNA deacylase from Pyrococcus horikoshii (strain ATCC 700860 / DSM 12428 / JCM 9974 / NBRC 100139 / OT-3).